The primary structure comprises 65 residues: MPKIKTNRGAAKRFKPTGSGGFKRAQSHRRHILTKKSTKRKRHLRSTGMIAECDKASVRQMLPHV.

The tract at residues Met-1–Ser-46 is disordered. The segment covering Ala-25 to Arg-45 has biased composition (basic residues).

The protein belongs to the bacterial ribosomal protein bL35 family.

The chain is Large ribosomal subunit protein bL35 from Thioalkalivibrio sulfidiphilus (strain HL-EbGR7).